Reading from the N-terminus, the 493-residue chain is Ketol-acid reductoisomerase (NADP(+)) (493 aa).

The 195-residue stretch at 14–208 folds into the KARI N-terminal Rossmann domain; the sequence is LDQLGRCRFM…GGHRAGVLES (195 aa). NADP(+) contacts are provided by residues 45–48, R68, R76, S78, and 108–110; these read CGAQ and DKQ. The active site involves H132. G158 is a binding site for NADP(+). 2 consecutive KARI C-terminal knotted domains span residues 209-345 and 346-486; these read SFVA…APKG and ENIK…MTDM. The Mg(2+) site is built by D217, E221, E390, and E394. S415 is a substrate binding site.

It belongs to the ketol-acid reductoisomerase family. Requires Mg(2+) as cofactor.

It catalyses the reaction (2R)-2,3-dihydroxy-3-methylbutanoate + NADP(+) = (2S)-2-acetolactate + NADPH + H(+). It carries out the reaction (2R,3R)-2,3-dihydroxy-3-methylpentanoate + NADP(+) = (S)-2-ethyl-2-hydroxy-3-oxobutanoate + NADPH + H(+). The protein operates within amino-acid biosynthesis; L-isoleucine biosynthesis; L-isoleucine from 2-oxobutanoate: step 2/4. It participates in amino-acid biosynthesis; L-valine biosynthesis; L-valine from pyruvate: step 2/4. Functionally, involved in the biosynthesis of branched-chain amino acids (BCAA). Catalyzes an alkyl-migration followed by a ketol-acid reduction of (S)-2-acetolactate (S2AL) to yield (R)-2,3-dihydroxy-isovalerate. In the isomerase reaction, S2AL is rearranged via a Mg-dependent methyl migration to produce 3-hydroxy-3-methyl-2-ketobutyrate (HMKB). In the reductase reaction, this 2-ketoacid undergoes a metal-dependent reduction by NADPH to yield (R)-2,3-dihydroxy-isovalerate. The chain is Ketol-acid reductoisomerase (NADP(+)) from Histophilus somni (strain 129Pt) (Haemophilus somnus).